The chain runs to 108 residues: MEGLRPSDRLLSLLLTVGGLSLVLAQSECNCSSVSPGVLAGIVLGDLMLTLLIALAVYYLGRLVPRGRGATEVTRKQHIPETESPYQELQGQRTDVYSDLNTQRPYYK.

An N-terminal signal peptide occupies residues 1–25 (MEGLRPSDRLLSLLLTVGGLSLVLA). Over 26 to 36 (QSECNCSSVSP) the chain is Extracellular. Residues 37–57 (GVLAGIVLGDLMLTLLIALAV) traverse the membrane as a helical segment. Asp-46 contributes to the Ca(2+) binding site. Topologically, residues 58–108 (YYLGRLVPRGRGATEVTRKQHIPETESPYQELQGQRTDVYSDLNTQRPYYK) are cytoplasmic. The segment at 71 to 108 (TEVTRKQHIPETESPYQELQGQRTDVYSDLNTQRPYYK) is disordered. The ITAM domain occupies 75–103 (RKQHIPETESPYQELQGQRTDVYSDLNTQ). The segment covering 84-108 (SPYQELQGQRTDVYSDLNTQRPYYK) has biased composition (polar residues). 2 positions are modified to phosphotyrosine: Tyr-86 and Tyr-97.

It belongs to the TYROBP family. In terms of assembly, homodimer; disulfide-linked. Homotrimer; disulfide-linked. Homotetramer; disulfide-linked. Homotrimers and homotetramers form when low levels of partner receptors are available and is competitive with assembly with interacting receptors. They may represent alternative oligomerization states or may be intermediates in the receptor assembly process. Binding of a metal cation aids in homooligomerization through coordination of the metal ion by the subunits of the oligomer. Interacts with TREM1. Interacts with TREM2. Interacts with CLECSF5. Interacts with CD300LB and CD300C2. Interacts with CD300E. Interacts (via ITAM domain) with SYK (via SH2 domains); activates SYK mediating neutrophils and macrophages integrin-mediated activation. Interacts with KLRC2. Interacts with CD300H. Interacts with KLRD1. Interacts with SIGLEC1. Post-translationally, following ligand binding by associated receptors, tyrosine phosphorylated in the ITAM domain which leads to activation of additional tyrosine kinases and subsequent cell activation.

It localises to the cell membrane. Adapter protein which non-covalently associates with activating receptors found on the surface of a variety of immune cells to mediate signaling and cell activation following ligand binding by the receptors. TYROBP is tyrosine-phosphorylated in the ITAM domain following ligand binding by the associated receptors which leads to activation of additional tyrosine kinases and subsequent cell activation. Also has an inhibitory role in some cells. Non-covalently associates with activating receptors of the CD300 family to mediate cell activation. Also mediates cell activation through association with activating receptors of the CD200R family. Required for neutrophil activation mediated by integrin. Required for the activation of myeloid cells mediated by the CLEC5A/MDL1 receptor. Associates with natural killer (NK) cell receptors such as the KLRD1/KLRC2 heterodimer to mediate NK cell activation. Associates with TREM1 to mediate activation of neutrophils and monocytes. Associates with TREM2 on monocyte-derived dendritic cells to mediate up-regulation of chemokine receptor CCR7 and dendritic cell maturation and survival. Association with TREM2 mediates cytokine-induced formation of multinucleated giant cells which are formed by the fusion of macrophages. Stabilizes the TREM2 C-terminal fragment (TREM2-CTF) produced by TREM2 ectodomain shedding which suppresses the release of pro-inflammatory cytokines. In microglia, required with TREM2 for phagocytosis of apoptotic neurons. Required with ITGAM/CD11B in microglia to control production of microglial superoxide ions which promote the neuronal apoptosis that occurs during brain development. Promotes pro-inflammatory responses in microglia following nerve injury which accelerates degeneration of injured neurons. Positively regulates the expression of the IRAK3/IRAK-M kinase and IL10 production by liver dendritic cells and inhibits their T cell allosimulatory ability. Negatively regulates B cell proliferation. Required for CSF1-mediated osteoclast cytoskeletal organization. Positively regulates multinucleation during osteoclast development. This Bos taurus (Bovine) protein is TYRO protein tyrosine kinase-binding protein.